The chain runs to 250 residues: Coproheme decarboxylase (250 aa).

Fe-coproporphyrin III contacts are provided by residues Arg131, 145–149 (YPMNK), His172, and Gln185. Tyr145 is an active-site residue.

Belongs to the ChdC family. Type 1 subfamily. It depends on Fe-coproporphyrin III as a cofactor.

It carries out the reaction Fe-coproporphyrin III + 2 H2O2 + 2 H(+) = heme b + 2 CO2 + 4 H2O. The enzyme catalyses Fe-coproporphyrin III + H2O2 + H(+) = harderoheme III + CO2 + 2 H2O. It catalyses the reaction harderoheme III + H2O2 + H(+) = heme b + CO2 + 2 H2O. It participates in porphyrin-containing compound metabolism; protoheme biosynthesis. Its function is as follows. Involved in coproporphyrin-dependent heme b biosynthesis. Catalyzes the decarboxylation of Fe-coproporphyrin III (coproheme) to heme b (protoheme IX), the last step of the pathway. The reaction occurs in a stepwise manner with a three-propionate intermediate. The chain is Coproheme decarboxylase from Staphylococcus aureus (strain MSSA476).